A 290-amino-acid polypeptide reads, in one-letter code: UPF0761 membrane protein YihY (290 aa).

6 helical membrane-spanning segments follow: residues 44–64 (LLSL…FPMF), 104–124 (VGAC…DSAL), 140–160 (FAVY…SLAI), 183–203 (IFPL…VPTI), 210–230 (AIVG…GFAL), and 244–264 (VLAV…IVLL).

This sequence belongs to the UPF0761 family.

The protein localises to the cell inner membrane. In Shigella boydii serotype 4 (strain Sb227), this protein is UPF0761 membrane protein YihY.